A 264-amino-acid chain; its full sequence is Phosphatidylglycerol--prolipoprotein diacylglyceryl transferase (264 aa).

Helical transmembrane passes span 17–37 (LAIH…LWLA), 59–79 (LLFY…VLFY), and 95–115 (WKGG…MALF). R142 lines the a 1,2-diacyl-sn-glycero-3-phospho-(1'-sn-glycerol) pocket. 2 consecutive transmembrane segments (helical) span residues 205–225 (GQVS…AEYF) and 241–261 (MGQW…VWAG).

The protein belongs to the Lgt family.

The protein localises to the cell inner membrane. It catalyses the reaction L-cysteinyl-[prolipoprotein] + a 1,2-diacyl-sn-glycero-3-phospho-(1'-sn-glycerol) = an S-1,2-diacyl-sn-glyceryl-L-cysteinyl-[prolipoprotein] + sn-glycerol 1-phosphate + H(+). Its pathway is protein modification; lipoprotein biosynthesis (diacylglyceryl transfer). Functionally, catalyzes the transfer of the diacylglyceryl group from phosphatidylglycerol to the sulfhydryl group of the N-terminal cysteine of a prolipoprotein, the first step in the formation of mature lipoproteins. In Methylibium petroleiphilum (strain ATCC BAA-1232 / LMG 22953 / PM1), this protein is Phosphatidylglycerol--prolipoprotein diacylglyceryl transferase.